The chain runs to 310 residues: GPN-loop GTPase 2 (310 aa).

Residue Ala2 is modified to N-acetylalanine. 19-24 (GSGKTT) provides a ligand contact to GTP. The short motif at 76–78 (GPN) is the Gly-Pro-Asn (GPN)-loop; involved in dimer interface element. GTP is bound at residue 178-181 (SKMD).

This sequence belongs to the GPN-loop GTPase family. As to quaternary structure, heterodimers with GPN1 or GPN3. Binds to RNA polymerase II (RNAPII).

In terms of biological role, small GTPase required for proper localization of RNA polymerase II and III (RNAPII and RNAPIII). May act at an RNAP assembly step prior to nuclear import. This Mus musculus (Mouse) protein is GPN-loop GTPase 2.